The primary structure comprises 581 residues: Ras-specific guanine nucleotide-releasing factor RalGPS1 (581 aa).

Residues Met-1–Ser-31 form a disordered region. The Ras-GEF domain occupies Thr-49–Gly-288. Residues Pro-320–Ser-339 are disordered. The PXXP motif lies at Pro-329–Pro-332. The 113-residue stretch at Ser-455–Arg-567 folds into the PH domain.

The protein resides in the cytoplasm. Its subcellular location is the cell membrane. Its function is as follows. Guanine nucleotide exchange factor. May be involved in cytoskeletal organization. This Danio rerio (Zebrafish) protein is Ras-specific guanine nucleotide-releasing factor RalGPS1 (ralgps1).